The following is a 280-amino-acid chain: Shikimate dehydrogenase (NADP(+)) (280 aa).

Shikimate-binding positions include 20-22 (SRS) and Thr-67. Catalysis depends on Lys-71, which acts as the Proton acceptor. Position 82 (Asp-82) interacts with NADP(+). Asn-91 and Asp-106 together coordinate shikimate. NADP(+) contacts are provided by residues 131-135 (GAGGS) and Leu-220. Residue Tyr-222 coordinates shikimate. An NADP(+)-binding site is contributed by Gly-243.

It belongs to the shikimate dehydrogenase family. Homodimer.

It catalyses the reaction shikimate + NADP(+) = 3-dehydroshikimate + NADPH + H(+). Its pathway is metabolic intermediate biosynthesis; chorismate biosynthesis; chorismate from D-erythrose 4-phosphate and phosphoenolpyruvate: step 4/7. In terms of biological role, involved in the biosynthesis of the chorismate, which leads to the biosynthesis of aromatic amino acids. Catalyzes the reversible NADPH linked reduction of 3-dehydroshikimate (DHSA) to yield shikimate (SA). This chain is Shikimate dehydrogenase (NADP(+)), found in Rhodopseudomonas palustris (strain HaA2).